A 328-amino-acid polypeptide reads, in one-letter code: Arylacetonitrilase (328 aa).

The CN hydrolase domain occupies 5–278; it reads VRVAVTQAEP…EGIIYADLDF (274 aa). The active-site Proton acceptor is the Glu45. The active site involves Lys125. Cys160 acts as the Nucleophile in catalysis.

Belongs to the carbon-nitrogen hydrolase superfamily. Nitrilase family.

The catalysed reaction is a nitrile + 2 H2O = a carboxylate + NH4(+). It carries out the reaction 4-chlorophenylacetonitrile + 2 H2O = 4-chlorophenylacetate + NH4(+). Nitrilase that hydrolyzes preferentially phenylacetonitrile, (R,S)-mandelonitrile, and 3-indolylacetonitrile. This Aspergillus niger (strain ATCC MYA-4892 / CBS 513.88 / FGSC A1513) protein is Arylacetonitrilase.